Here is a 391-residue protein sequence, read N- to C-terminus: DNA-directed RNA polymerase I subunit RPA43 (391 aa).

Disordered stretches follow at residues 1 to 27 (MANW…SGGS) and 220 to 391 (QKQV…KKSK). Positions 288–299 (GRHKEKKKKKKR) are enriched in basic residues. A coiled-coil region spans residues 289–353 (RHKEKKKKKK…RDKQQDSAEI (65 aa)). Residues 312–323 (MNNNSLQETALD) are compositionally biased toward polar residues. The span at 336 to 345 (KEKKKKKKRD) shows a compositional bias: basic residues.

This sequence belongs to the eukaryotic RPA43 RNA polymerase subunit family. In terms of assembly, component of the RNA polymerase I (Pol I) complex consisting of at least 13 subunits.

The protein localises to the nucleus. It is found in the nucleolus. DNA-dependent RNA polymerase catalyzes the transcription of DNA into RNA using the four ribonucleoside triphosphates as substrates. Component of RNA polymerase I which synthesizes ribosomal RNA precursors. May be involved in recruitment of Pol I to rDNA promoters. This Danio rerio (Zebrafish) protein is DNA-directed RNA polymerase I subunit RPA43.